The chain runs to 250 residues: Envelope glycoprotein L (250 aa).

The first 18 residues, 1 to 18 (MELLLFVMSLILLTFSKA), serve as a signal peptide directing secretion. Residues 31 to 239 (KLDDCIAAVI…EAYNSKLPFR (209 aa)) enclose the gL betaherpesvirus-type domain. Cys136 and Cys141 are disulfide-bonded.

It belongs to the herpesviridae glycoprotein L (gL) family. Betaherpesvirinae gL subfamily. As to quaternary structure, interacts with glycoprotein H (gH); this interaction is necessary for the correct processing and cell surface expression of gH. Part of a gH-gL-gO complex.

The protein localises to the virion membrane. It is found in the host cell membrane. Its subcellular location is the host Golgi apparatus. It localises to the host trans-Golgi network. Functionally, the heterodimer glycoprotein H-glycoprotein L is required for the fusion of viral and plasma membranes leading to virus entry into the host cell. Acts as a functional inhibitor of gH and maintains gH in an inhibited form. Upon binding to host integrins, gL dissociates from gH leading to activation of the viral fusion glycoproteins gB and gH. This Homo sapiens (Human) protein is Envelope glycoprotein L.